Here is a 234-residue protein sequence, read N- to C-terminus: Glycerol-3-phosphate acyltransferase (234 aa).

Helical transmembrane passes span 4–24 (LLAI…LIAG), 56–76 (TVTL…VAFF), 90–110 (VALR…TVFA), 122–142 (AGML…VFLL), 152–172 (VASI…KYLF), and 191–211 (FHDS…IAII).

The protein belongs to the PlsY family. As to quaternary structure, probably interacts with PlsX.

Its subcellular location is the cell inner membrane. The catalysed reaction is an acyl phosphate + sn-glycerol 3-phosphate = a 1-acyl-sn-glycero-3-phosphate + phosphate. It participates in lipid metabolism; phospholipid metabolism. Its function is as follows. Catalyzes the transfer of an acyl group from acyl-phosphate (acyl-PO(4)) to glycerol-3-phosphate (G3P) to form lysophosphatidic acid (LPA). This enzyme utilizes acyl-phosphate as fatty acyl donor, but not acyl-CoA or acyl-ACP. The sequence is that of Glycerol-3-phosphate acyltransferase from Chlorobium chlorochromatii (strain CaD3).